Reading from the N-terminus, the 100-residue chain is NADH-quinone oxidoreductase subunit K 2 (100 aa).

3 consecutive transmembrane segments (helical) span residues 4–24, 28–48, and 60–80; these read LWWF…GVLL, ILVV…NFIA, and IFAI…LGIL.

Belongs to the complex I subunit 4L family. As to quaternary structure, NDH-1 is composed of 14 different subunits. Subunits NuoA, H, J, K, L, M, N constitute the membrane sector of the complex.

Its subcellular location is the cell inner membrane. The enzyme catalyses a quinone + NADH + 5 H(+)(in) = a quinol + NAD(+) + 4 H(+)(out). NDH-1 shuttles electrons from NADH, via FMN and iron-sulfur (Fe-S) centers, to quinones in the respiratory chain. The immediate electron acceptor for the enzyme in this species is believed to be ubiquinone. Couples the redox reaction to proton translocation (for every two electrons transferred, four hydrogen ions are translocated across the cytoplasmic membrane), and thus conserves the redox energy in a proton gradient. This Rhizobium etli (strain CIAT 652) protein is NADH-quinone oxidoreductase subunit K 2.